Here is a 366-residue protein sequence, read N- to C-terminus: NADH-quinone oxidoreductase subunit D (366 aa).

It belongs to the complex I 49 kDa subunit family. As to quaternary structure, NDH-1 is composed of 14 different subunits. Subunits NuoB, C, D, E, F, and G constitute the peripheral sector of the complex.

It is found in the cell membrane. It catalyses the reaction a quinone + NADH + 5 H(+)(in) = a quinol + NAD(+) + 4 H(+)(out). NDH-1 shuttles electrons from NADH, via FMN and iron-sulfur (Fe-S) centers, to quinones in the respiratory chain. The immediate electron acceptor for the enzyme in this species is believed to be a menaquinone. Couples the redox reaction to proton translocation (for every two electrons transferred, four hydrogen ions are translocated across the cytoplasmic membrane), and thus conserves the redox energy in a proton gradient. The sequence is that of NADH-quinone oxidoreductase subunit D from Geobacillus thermodenitrificans (strain NG80-2).